The primary structure comprises 408 residues: MDKLLERFLNYVSLDTQSKAGVRQVPSTEGQWKLLHLLKEQLEEMGLINVTLSEKGTLMATLPANVPGDIPAIGFISHVDTSPDCSGKNVNPQIVENYRGGDIALGIGDEVLSPVMFPVLHQLLGQTLITTDGKTLLGADDKAGIAEIMTALAVLQQKNIPHGDIRVAFTPDEEVGKGAKHFDVDAFDARWAYTVDGGGVGELEFENFNAASVNIKIVGNNVHPGTAKGVMVNALSLAARIHAEVPADESPEMTEGYEGFYHLAGMKGTVERADMHYIIRDFDRKQFEARKCKMMEIAKKVGKGLHPDCYIELVIEDSYYNMREKVVEHPHILDIAQQAMRDCDIEPELKPIRGGTDGAQLSFMGLPCPNLFTGGYNYHGKHEFVTLEGMEKAVQVIVRIAELTAQRK.

A Zn(2+)-binding site is contributed by histidine 78. Residue aspartate 80 is part of the active site. Aspartate 140 is a binding site for Zn(2+). Glutamate 173 serves as the catalytic Proton acceptor. Zn(2+) is bound by residues glutamate 174, aspartate 196, and histidine 379.

This sequence belongs to the peptidase M20B family. It depends on Zn(2+) as a cofactor.

The protein localises to the cytoplasm. It catalyses the reaction Release of the N-terminal residue from a tripeptide.. Its function is as follows. Cleaves the N-terminal amino acid of tripeptides. The sequence is that of Peptidase T from Shigella boydii serotype 18 (strain CDC 3083-94 / BS512).